The following is a 601-amino-acid chain: MSDKQQFIRNFSIIAHIDHGKSTLADRLLEIGQVTNDRTKKDQILDSMDIERERGITIKANNATFDYLADDGNTYTMNLLDTPGHVDFTYEVSRSLKACEGVLLIVDASQGVEAQTLANLYLAMEQDLEILPVMNKIDLPAADVEKTKIQIEESLGLDSEKAVAISAKTGLNVKAVLEAITKEIPAPKGDPKGPLKALIYDSYFDPYMGVVIKIRVFDGSIKKGDRFLIMSTGKDFTVNEVGINRIALTPTDGLGAGEVGYLIAGIKKVSDAKTGDTITLFSNPTKESIPGYKEAKPMVFSGLYPINGEQFDELVDAIEKLKLNDAALIFEKESSVALGFGFRVGYLGLLHMEIVQERLEREFNLDLITTAPSVKYIIRKKSGEVEEIDNPSRFPEPITIESTEEPYVKATVITPNEYVGNIMALAMDKRGIQLDTVYLTQDKVQLTYELPLAELIFEFYDKLKSFTRGYASLDYEPSGYRISQLVKMDILVNGEPVDALSMIVHRTKAEQRGREIIEKLKDLIPRHQFMIPIQAAVGGKILARESISALRKNVTAKCYGGDITRKKKLLEKQKEGKKRMKQIGNVEIPQEAFLAVLKTNN.

The tr-type G domain maps to 6–188 (QFIRNFSIIA…AITKEIPAPK (183 aa)). GTP contacts are provided by residues 18–23 (DHGKST) and 135–138 (NKID).

The protein belongs to the TRAFAC class translation factor GTPase superfamily. Classic translation factor GTPase family. LepA subfamily.

It localises to the cell inner membrane. The enzyme catalyses GTP + H2O = GDP + phosphate + H(+). Required for accurate and efficient protein synthesis under certain stress conditions. May act as a fidelity factor of the translation reaction, by catalyzing a one-codon backward translocation of tRNAs on improperly translocated ribosomes. Back-translocation proceeds from a post-translocation (POST) complex to a pre-translocation (PRE) complex, thus giving elongation factor G a second chance to translocate the tRNAs correctly. Binds to ribosomes in a GTP-dependent manner. The sequence is that of Elongation factor 4 from Leptospira borgpetersenii serovar Hardjo-bovis (strain JB197).